Here is a 360-residue protein sequence, read N- to C-terminus: MLVWLAEHLVKYYSGFNVFSYLTFRAIVSLLTALFISLWMGPRMIARLQKLSFGQVVRNDGPESHFSKRGTPTMGGIMILTAIVVSVLLWAYPSNPYVWCVLTVLIGYGIIGFVDDYRKVVRKDTKGLIARWKYFWMSVIALGVAFALYLAGKDTPATELVVPFFKDVMPQLGLFYILLAYFVIVGTGNAVNLTDGLDGLAIMPTVFVAGGFALVAWATGNMNFANYLHIPYLRHAGELVIVCTAIVGAGLGFLWFNTYPAQVFMGDVGSLALGGALGIIAVLLRQEFLLVIMGGVFVVETLSVILQVGSFKLRGQRIFRMAPIHHHYELKGWPEPRVIVRFWIISLMLVLIGLATLKVR.

10 consecutive transmembrane segments (helical) span residues 26 to 46 (AIVS…RMIA), 72 to 92 (PTMG…LWAY), 94 to 114 (SNPY…IGFV), 132 to 152 (WKYF…YLAG), 168 to 188 (VMPQ…VGTG), 199 to 219 (GLAI…AWAT), 236 to 256 (AGEL…FLWF), 263 to 283 (VFMG…IAVL), 288 to 308 (FLLV…ILQV), and 338 to 358 (VIVR…ATLK).

Belongs to the glycosyltransferase 4 family. MraY subfamily. The cofactor is Mg(2+).

Its subcellular location is the cell inner membrane. The catalysed reaction is UDP-N-acetyl-alpha-D-muramoyl-L-alanyl-gamma-D-glutamyl-meso-2,6-diaminopimeloyl-D-alanyl-D-alanine + di-trans,octa-cis-undecaprenyl phosphate = di-trans,octa-cis-undecaprenyl diphospho-N-acetyl-alpha-D-muramoyl-L-alanyl-D-glutamyl-meso-2,6-diaminopimeloyl-D-alanyl-D-alanine + UMP. It participates in cell wall biogenesis; peptidoglycan biosynthesis. Catalyzes the initial step of the lipid cycle reactions in the biosynthesis of the cell wall peptidoglycan: transfers peptidoglycan precursor phospho-MurNAc-pentapeptide from UDP-MurNAc-pentapeptide onto the lipid carrier undecaprenyl phosphate, yielding undecaprenyl-pyrophosphoryl-MurNAc-pentapeptide, known as lipid I. This is Phospho-N-acetylmuramoyl-pentapeptide-transferase from Enterobacter sp. (strain 638).